The chain runs to 359 residues: MFGPYSGGGGVPLPQMDADTYVRTIAAMPPHPLAPPPDSPRTPHTYVGFLPVFGDLPPLTGAVLQEPVPVPPEQRADQPVAVATENSAPTRPQLCAPYDDEVEATLRAMETNPAERPSPYFLETTQGGRMSALVRASMIAFMGEFSRKNKLADGTLQRAAYFLDRYLSVTPESDDALQLRLVGATAVFLAAKYEDQYTLRKIDASMVAARCGYTSETRHKMVSIMETEMLAALGFNLGGPTAYTFVEHFTRYYGDGEEEKQLKEAAHRVADGTLLTYGFHRYLPSMVAASSIFLARLHELGHEPWSNDLAELTGYKAIDLMGCVCDIYSQIACPRFALLQGKNKRVCKSTSMQGMNMMA.

It belongs to the cyclin family. Cyclin F subfamily.

This Oryza sativa subsp. japonica (Rice) protein is Putative cyclin-F1-2 (CYCF1-2).